Here is a 158-residue protein sequence, read N- to C-terminus: Large ribosomal subunit protein eL20z (158 aa).

Belongs to the eukaryotic ribosomal protein eL20 family.

The chain is Large ribosomal subunit protein eL20z (RPL18A1) from Arabidopsis thaliana (Mouse-ear cress).